We begin with the raw amino-acid sequence, 118 residues long: Large ribosomal subunit protein bL20 (118 aa).

This sequence belongs to the bacterial ribosomal protein bL20 family.

Functionally, binds directly to 23S ribosomal RNA and is necessary for the in vitro assembly process of the 50S ribosomal subunit. It is not involved in the protein synthesizing functions of that subunit. The polypeptide is Large ribosomal subunit protein bL20 (Syntrophotalea carbinolica (strain DSM 2380 / NBRC 103641 / GraBd1) (Pelobacter carbinolicus)).